The sequence spans 354 residues: Uroporphyrinogen decarboxylase (354 aa).

Substrate is bound by residues 27–31 (RQAGR), Asp-77, Tyr-154, Thr-209, and His-327.

This sequence belongs to the uroporphyrinogen decarboxylase family. Homodimer.

Its subcellular location is the cytoplasm. The enzyme catalyses uroporphyrinogen III + 4 H(+) = coproporphyrinogen III + 4 CO2. Its pathway is porphyrin-containing compound metabolism; protoporphyrin-IX biosynthesis; coproporphyrinogen-III from 5-aminolevulinate: step 4/4. Functionally, catalyzes the decarboxylation of four acetate groups of uroporphyrinogen-III to yield coproporphyrinogen-III. This Salmonella newport (strain SL254) protein is Uroporphyrinogen decarboxylase.